Here is a 509-residue protein sequence, read N- to C-terminus: Activin receptor type-1 (509 aa).

The first 20 residues, 1–20 (MVDGVMILPVLMMMAFPSPS), serve as a signal peptide directing secretion. Topologically, residues 21–123 (VEDEKPKVNQ…FPGTQNFHLE (103 aa)) are extracellular. The N-linked (GlcNAc...) asparagine glycan is linked to Asn-102. The chain crosses the membrane as a helical span at residues 124-146 (VGLIILSVVFAVCLLACILGVAL). The Cytoplasmic segment spans residues 147-509 (RKFKRRNQER…NSLDKLKTDC (363 aa)). The 30-residue stretch at 178-207 (STLAELLDHSCTSGSGSGLPFLVQRTVARQ) folds into the GS domain. Residues 208 to 502 (ITLLECVGKG…KTLTKIDNSL (295 aa)) enclose the Protein kinase domain. ATP contacts are provided by residues 214–222 (VGKGRYGEV) and Lys-235. The active-site Proton acceptor is the Asp-336. Residue Ser-501 is modified to Phosphoserine.

Belongs to the protein kinase superfamily. TKL Ser/Thr protein kinase family. TGFB receptor subfamily. As to quaternary structure, interacts with FKBP1A. Interacts with FCHO1. Interacts with CLU. Interacts with type II receptors AMHR2 and ACVR2A. Interacts with BMP7. Interacts with BMP9. Interacts with BMP6 (when glycosylated); the interaction may induce HAMP expression. Interacts with TSC22D1/TSC-22. Requires Mg(2+) as cofactor. The cofactor is Mn(2+). Highly expressed in bone during developmental stages. Expressed in normal parenchymal cells, endothelial cells, fibroblasts and tumor-derived epithelial cells.

Its subcellular location is the membrane. The enzyme catalyses L-threonyl-[receptor-protein] + ATP = O-phospho-L-threonyl-[receptor-protein] + ADP + H(+). It carries out the reaction L-seryl-[receptor-protein] + ATP = O-phospho-L-seryl-[receptor-protein] + ADP + H(+). Its function is as follows. Bone morphogenetic protein (BMP) type I receptor that is involved in a wide variety of biological processes, including bone, heart, cartilage, nervous, and reproductive system development and regulation. As a type I receptor, forms heterotetrameric receptor complexes with the type II receptors AMHR2, ACVR2A ors ACVR2B. Upon binding of ligands such as BMP7 or BMP9 to the heteromeric complexes, type II receptors transphosphorylate ACVR1 intracellular domain. In turn, ACVR1 kinase domain is activated and subsequently phosphorylates SMAD1/5/8 proteins that transduce the signal. In addition to its role in mediating BMP pathway-specific signaling, suppresses TGFbeta/activin pathway signaling by interfering with the binding of activin to its type II receptor. Besides canonical SMAD signaling, can activate non-canonical pathways such as p38 mitogen-activated protein kinases/MAPKs. May promote the expression of HAMP, potentially via its interaction with BMP6. The protein is Activin receptor type-1 (Acvr1) of Mus musculus (Mouse).